We begin with the raw amino-acid sequence, 436 residues long: Trigger factor (436 aa).

In terms of domain architecture, PPIase FKBP-type spans 163-248 (GDRVVLDFAG…VKEVAEGVLP (86 aa)).

It belongs to the FKBP-type PPIase family. Tig subfamily.

Its subcellular location is the cytoplasm. It carries out the reaction [protein]-peptidylproline (omega=180) = [protein]-peptidylproline (omega=0). Its function is as follows. Involved in protein export. Acts as a chaperone by maintaining the newly synthesized protein in an open conformation. Functions as a peptidyl-prolyl cis-trans isomerase. This Bordetella bronchiseptica (strain ATCC BAA-588 / NCTC 13252 / RB50) (Alcaligenes bronchisepticus) protein is Trigger factor.